The chain runs to 95 residues: Large ribosomal subunit protein bL28 (95 aa).

This sequence belongs to the bacterial ribosomal protein bL28 family.

The chain is Large ribosomal subunit protein bL28 from Dinoroseobacter shibae (strain DSM 16493 / NCIMB 14021 / DFL 12).